Here is a 473-residue protein sequence, read N- to C-terminus: Ribulose bisphosphate carboxylase large chain (473 aa).

The propeptide occupies 1–2; the sequence is MS. Pro3 bears the N-acetylproline mark. Lys14 bears the N6,N6,N6-trimethyllysine mark. Positions 123 and 173 each coordinate substrate. Lys175 acts as the Proton acceptor in catalysis. Lys177 contributes to the substrate binding site. 3 residues coordinate Mg(2+): Lys201, Asp203, and Glu204. Position 201 is an N6-carboxylysine (Lys201). His294 serves as the catalytic Proton acceptor. Substrate contacts are provided by Arg295, His327, and Ser379.

It belongs to the RuBisCO large chain family. Type I subfamily. Heterohexadecamer of 8 large chains and 8 small chains; disulfide-linked. The disulfide link is formed within the large subunit homodimers. It depends on Mg(2+) as a cofactor. The disulfide bond which can form in the large chain dimeric partners within the hexadecamer appears to be associated with oxidative stress and protein turnover.

It is found in the plastid. Its subcellular location is the chloroplast. The catalysed reaction is 2 (2R)-3-phosphoglycerate + 2 H(+) = D-ribulose 1,5-bisphosphate + CO2 + H2O. It catalyses the reaction D-ribulose 1,5-bisphosphate + O2 = 2-phosphoglycolate + (2R)-3-phosphoglycerate + 2 H(+). Functionally, ruBisCO catalyzes two reactions: the carboxylation of D-ribulose 1,5-bisphosphate, the primary event in carbon dioxide fixation, as well as the oxidative fragmentation of the pentose substrate in the photorespiration process. Both reactions occur simultaneously and in competition at the same active site. This is Ribulose bisphosphate carboxylase large chain from Cajanus cajan (Pigeon pea).